The primary structure comprises 311 residues: Cytochrome f (311 aa).

The signal sequence occupies residues 1–27 (MRRHLSLLIGSLVLGLSLLIAPAASWA). Positions 28, 48, 51, and 52 each coordinate heme. A helical membrane pass occupies residues 277 to 297 (IYGLLAFFAAVALAQIMLVLK).

Belongs to the cytochrome f family. In terms of assembly, the 4 large subunits of the cytochrome b6-f complex are cytochrome b6, subunit IV (17 kDa polypeptide, PetD), cytochrome f and the Rieske protein, while the 4 small subunits are PetG, PetL, PetM and PetN. The complex functions as a dimer. Requires heme as cofactor.

It localises to the cellular thylakoid membrane. Functionally, component of the cytochrome b6-f complex, which mediates electron transfer between photosystem II (PSII) and photosystem I (PSI), cyclic electron flow around PSI, and state transitions. This is Cytochrome f from Parasynechococcus marenigrum (strain WH8102).